Consider the following 607-residue polypeptide: Granule-bound starch synthase 1, chloroplastic/amyloplastic (607 aa).

Residues 1–77 (MASITASHHF…RPGCSATIVC (77 aa)) constitute a chloroplast transit peptide. Residue lysine 95 participates in ADP-alpha-D-glucose binding. The tract at residues 585–607 (SGSEPGVEGEEIAPLAKENVATP) is disordered.

This sequence belongs to the glycosyltransferase 1 family. Bacterial/plant glycogen synthase subfamily.

It is found in the plastid. The protein localises to the chloroplast. The protein resides in the amyloplast. It catalyses the reaction an NDP-alpha-D-glucose + [(1-&gt;4)-alpha-D-glucosyl](n) = [(1-&gt;4)-alpha-D-glucosyl](n+1) + a ribonucleoside 5'-diphosphate + H(+). It functions in the pathway glycan biosynthesis; starch biosynthesis. In Solanum tuberosum (Potato), this protein is Granule-bound starch synthase 1, chloroplastic/amyloplastic (WAXY).